Here is a 304-residue protein sequence, read N- to C-terminus: Glutaminase (304 aa).

The substrate site is built by Ser-63, Asn-114, Glu-158, Asn-165, Tyr-189, Tyr-240, and Val-258.

This sequence belongs to the glutaminase family. As to quaternary structure, homotetramer.

The enzyme catalyses L-glutamine + H2O = L-glutamate + NH4(+). The protein is Glutaminase of Shewanella baltica (strain OS223).